Reading from the N-terminus, the 512-residue chain is Protein OS-9 homolog (512 aa).

A signal peptide spans methionine 1 to alanine 17. Residues glutamine 71–serine 91 are disordered. The span at arginine 73–aspartate 88 shows a compositional bias: basic and acidic residues. N-linked (GlcNAc...) asparagine glycosylation occurs at asparagine 118. One can recognise an MRH domain in the interval aspartate 149 to aspartate 288. Cysteine 151 and cysteine 164 are disulfide-bonded. Residues tryptophan 158, tryptophan 159, glutamine 171, aspartate 242, arginine 248, glutamate 270, and tyrosine 276 each contribute to the a mannooligosaccharide derivative site. Cystine bridges form between cysteine 241/cysteine 274 and cysteine 256/cysteine 286. 2 disordered regions span residues glutamine 329 to valine 349 and alanine 485 to leucine 512. Positions aspartate 492–glutamine 504 are enriched in acidic residues. Residues lysine 509–leucine 512 carry the Prevents secretion from ER motif.

The protein belongs to the OS-9 family. Interacts with missfolded ER lumenal proteins.

It is found in the endoplasmic reticulum membrane. Functionally, lectin involved in the quality control of the secretory pathway. As a member of the endoplasmic reticulum-associated degradation lumenal (ERAD-L) surveillance system, targets misfolded endoplasmic reticulum lumenal glycoproteins for degradation. In Gibberella zeae (strain ATCC MYA-4620 / CBS 123657 / FGSC 9075 / NRRL 31084 / PH-1) (Wheat head blight fungus), this protein is Protein OS-9 homolog (YOS1).